The following is a 227-amino-acid chain: Cytochrome c oxidase subunit 2 (227 aa).

The Mitochondrial intermembrane segment spans residues 1 to 14 (MAYPFQLGLQDATS). A helical transmembrane segment spans residues 15–45 (PIMEELLHFHDHTLMIVFLISSLVLYIISSM). Over 46–59 (LTTKLTHTSTMDAQ) the chain is Mitochondrial matrix. Residues 60–87 (EVETVWTILPAIILVLIALPSLRILYMM) traverse the membrane as a helical segment. The Mitochondrial intermembrane portion of the chain corresponds to 88–227 (DETNNPSLTV…YFETWSALMV (140 aa)). Cu cation is bound by residues histidine 161, cysteine 196, glutamate 198, cysteine 200, histidine 204, and methionine 207. Glutamate 198 contributes to the Mg(2+) binding site. Residue tyrosine 218 is modified to Phosphotyrosine.

It belongs to the cytochrome c oxidase subunit 2 family. Component of the cytochrome c oxidase (complex IV, CIV), a multisubunit enzyme composed of 14 subunits. The complex is composed of a catalytic core of 3 subunits MT-CO1, MT-CO2 and MT-CO3, encoded in the mitochondrial DNA, and 11 supernumerary subunits COX4I, COX5A, COX5B, COX6A, COX6B, COX6C, COX7A, COX7B, COX7C, COX8 and NDUFA4, which are encoded in the nuclear genome. The complex exists as a monomer or a dimer and forms supercomplexes (SCs) in the inner mitochondrial membrane with NADH-ubiquinone oxidoreductase (complex I, CI) and ubiquinol-cytochrome c oxidoreductase (cytochrome b-c1 complex, complex III, CIII), resulting in different assemblies (supercomplex SCI(1)III(2)IV(1) and megacomplex MCI(2)III(2)IV(2)). Found in a complex with TMEM177, COA6, COX18, COX20, SCO1 and SCO2. Interacts with TMEM177 in a COX20-dependent manner. Interacts with COX20. Interacts with COX16. The cofactor is Cu cation.

It is found in the mitochondrion inner membrane. It carries out the reaction 4 Fe(II)-[cytochrome c] + O2 + 8 H(+)(in) = 4 Fe(III)-[cytochrome c] + 2 H2O + 4 H(+)(out). Its function is as follows. Component of the cytochrome c oxidase, the last enzyme in the mitochondrial electron transport chain which drives oxidative phosphorylation. The respiratory chain contains 3 multisubunit complexes succinate dehydrogenase (complex II, CII), ubiquinol-cytochrome c oxidoreductase (cytochrome b-c1 complex, complex III, CIII) and cytochrome c oxidase (complex IV, CIV), that cooperate to transfer electrons derived from NADH and succinate to molecular oxygen, creating an electrochemical gradient over the inner membrane that drives transmembrane transport and the ATP synthase. Cytochrome c oxidase is the component of the respiratory chain that catalyzes the reduction of oxygen to water. Electrons originating from reduced cytochrome c in the intermembrane space (IMS) are transferred via the dinuclear copper A center (CU(A)) of subunit 2 and heme A of subunit 1 to the active site in subunit 1, a binuclear center (BNC) formed by heme A3 and copper B (CU(B)). The BNC reduces molecular oxygen to 2 water molecules using 4 electrons from cytochrome c in the IMS and 4 protons from the mitochondrial matrix. The sequence is that of Cytochrome c oxidase subunit 2 (MT-CO2) from Chrysocyon brachyurus (Maned wolf).